The chain runs to 130 residues: Small ribosomal subunit protein uS11 (130 aa).

It belongs to the universal ribosomal protein uS11 family. Part of the 30S ribosomal subunit. Interacts with proteins S7 and S18. Binds to IF-3.

Located on the platform of the 30S subunit, it bridges several disparate RNA helices of the 16S rRNA. Forms part of the Shine-Dalgarno cleft in the 70S ribosome. In Thermosynechococcus vestitus (strain NIES-2133 / IAM M-273 / BP-1), this protein is Small ribosomal subunit protein uS11.